The primary structure comprises 938 residues: Glutamate receptor ionotropic, NMDA 1 (938 aa).

A signal peptide spans 1-18 (MSTMHLLTFALLFSCSFA). The Extracellular portion of the chain corresponds to 19–559 (RAACDPKIVN…TLDSFMQPFQ (541 aa)). N-linked (GlcNAc...) asparagine glycosylation is found at Asn61, Asn203, Asn239, Asn276, Asn300, Asn350, Asn368, Asn440, Asn471, and Asn491. The cysteines at positions 79 and 308 are disulfide-linked. Disulfide bonds link Cys420–Cys454 and Cys436–Cys455. Glycine-binding residues include Pro516, Thr518, and Arg523. Residues 560 to 580 (STLWLLVGLSVHVVAVMLYLL) form a helical membrane-spanning segment. The Cytoplasmic portion of the chain corresponds to 581–602 (DRFSPFGRFKVNSEEEEEDALT). Positions 603-624 (LSSAMWFSWGVLLNSGIGEGAP) form an intramembrane region, discontinuously helical. The interval 603 to 624 (LSSAMWFSWGVLLNSGIGEGAP) is pore-forming. At 625–630 (RSFSAR) the chain is on the cytoplasmic side. Residues 631 to 647 (ILGMVWAGFAMIIVASY) traverse the membrane as a helical segment. Over 648–812 (TANLAAFLVL…NAPATLTFEN (165 aa)) the chain is Extracellular. Asn674 is a glycosylation site (N-linked (GlcNAc...) asparagine). Glycine is bound by residues Ser688 and Asp732. Cys744 and Cys798 form a disulfide bridge. Asn771 carries N-linked (GlcNAc...) asparagine glycosylation. The chain crosses the membrane as a helical span at residues 813–833 (MAGVFMLVAGGIVAGIFLIFI). The Cytoplasmic segment spans residues 834-938 (EIAYKRHKDA…LQLCSRHRES (105 aa)). At Ser889 the chain carries Phosphoserine; by PKC. The segment at 889–938 (SSFKRRRSSKDTSTGGGRGALQNQKDTVLPRRAIEREEGQLQLCSRHRES) is disordered. Ser890 bears the Phosphoserine mark. Phosphoserine; by PKC is present on residues Ser896 and Ser897. Residues 916–927 (VLPRRAIEREEG) are compositionally biased toward basic and acidic residues.

It belongs to the glutamate-gated ion channel (TC 1.A.10.1) family. NR1/GRIN1 subfamily. Heterotetramer; the NMDAR subunits are modular and harbor tiered domains that function in concert to regulate opening and closing of the cation-selective ion channel pore. Forms heterotetrameric channels composed of two GluN1/zeta subunits (GRIN1), and two identical GluN2/epsilon subunits (GRIN2A, GRIN2B, GRIN2C or GRIN2D) or GluN3 subunits (GRIN3A or GRIN3B) (in vitro). Can also form heterotetrameric channels that contain at least two GluN1 subunits and at least two different GluN2 subunits (or a combination of one GluN2 and one GluN3 subunits) (in vitro). In vivo, the subunit composition may vary in function of the expression levels of the different subunits. Found in a complex with GRIN2A or GRIN2B, GRIN3A and PPP2CB. Found in a complex with GRIN2A or GRIN2B and GRIN3B. Interacts with SNX27 (via PDZ domain); the interaction is required for recycling to the plasma membrane when endocytosed and prevent degradation in lysosomes. Interacts with DLG4 and MPDZ. Interacts with LRFN1 and LRFN2. Interacts with MYZAP. Found in a complex with DLG4 and PRR7. Found in a complex with GRIN2B and PRR7. Interacts with PRR7; the interaction is reduced following NMDA receptor activity. In terms of processing, NMDA is probably regulated by C-terminal phosphorylation of an isoform of GRIN1 by PKC. Dephosphorylated on Ser-897 probably by protein phosphatase 2A (PPP2CB). Its phosphorylated state is influenced by the formation of the NMDAR-PPP2CB complex and the NMDAR channel activity. In terms of tissue distribution, detected in brain (at protein level). Detected in brain.

The protein localises to the cell membrane. Its subcellular location is the postsynaptic cell membrane. It localises to the postsynaptic density membrane. It is found in the synaptic cell membrane. It catalyses the reaction Ca(2+)(in) = Ca(2+)(out). The enzyme catalyses Na(+)(in) = Na(+)(out). The catalysed reaction is K(+)(in) = K(+)(out). In terms of biological role, component of N-methyl-D-aspartate (NMDA) receptors (NMDARs) that function as heterotetrameric, ligand-gated cation channels with high calcium permeability and voltage-dependent block by Mg(2+). NMDARs participate in synaptic plasticity for learning and memory formation by contributing to the long-term potentiation (LTP). Channel activation requires binding of the neurotransmitter L-glutamate to the GluN2 subunit, glycine or D-serine binding to the GluN1 subunit, plus membrane depolarization to eliminate channel inhibition by Mg(2+). NMDARs mediate simultaneously the potasium efflux and the influx of calcium and sodium. Each GluN2 or GluN3 subunit confers differential attributes to channel properties, including activation, deactivation and desensitization kinetics, pH sensitivity, Ca2(+) permeability, and binding to allosteric modulators. This Mus musculus (Mouse) protein is Glutamate receptor ionotropic, NMDA 1.